A 146-amino-acid chain; its full sequence is Probable transporter XF_0765 (146 aa).

4 helical membrane passes run 9–29 (FTVA…SEMI), 46–66 (NPSL…GMAL), 91–111 (IVFG…CPGP), and 116–136 (LSTG…GMII).

This sequence belongs to the TsuA/YedE (TC 9.B.102) family.

It is found in the cell inner membrane. This Xylella fastidiosa (strain 9a5c) protein is Probable transporter XF_0765.